We begin with the raw amino-acid sequence, 357 residues long: MRDSIYLLWIDNRLVVIIMMVMMVSCRCVLGLENINPIFFDEGLSHLFGEGNLIRSPDDRSVRLLLDKYTGSGFISSSMYQHGFFSSLIKLPGAYTAGIVVAFYTSNGDVFVKDHDELDIEFLGNLEGKPWRFQTNMYGNGSTNRGREERYRLWFDPSKEFHRYSILWTPTKIIFWVDDVPIREILRKEEMNGDYPQKPMSLYATIWDASSWATSGGKFGVDYTFSPFVSEFKDIALDGCNVSDSFPGENNNNNIGNYNNINCSVSDQFLMSNDYSTISPKQATAMRRFRERYMYYSYCYDTIRYSVPPPECVIVTAEKNRFRDTGRLKFGGSHPKVHKARKKRRRNRSTPVVSADL.

The first 31 residues, 1–31 (MRDSIYLLWIDNRLVVIIMMVMMVSCRCVLG), serve as a signal peptide directing secretion. A GH16 domain is found at 32–232 (LENINPIFFD…YTFSPFVSEF (201 aa)). The Nucleophile role is filled by Glu117. Catalysis depends on Glu121, which acts as the Proton donor. Xyloglucan is bound by residues Glu121 and 134-136 (QTN). Asn140 carries an N-linked (GlcNAc...) asparagine glycan. Xyloglucan is bound by residues 144 to 148 (NRGRE), 211 to 212 (SW), and Gly216. N-linked (GlcNAc...) asparagine glycosylation is found at Asn241 and Asn262. Cys299 and Cys312 are disulfide-bonded. A xyloglucan-binding site is contributed by Arg304. The tract at residues 326–357 (GRLKFGGSHPKVHKARKKRRRNRSTPVVSADL) is disordered. Over residues 335–348 (PKVHKARKKRRRNR) the composition is skewed to basic residues. N-linked (GlcNAc...) asparagine glycosylation is present at Asn347.

Belongs to the glycosyl hydrolase 16 family. XTH group 3 subfamily. Contains at least one intrachain disulfide bond essential for its enzymatic activity.

The protein localises to the secreted. It is found in the cell wall. It localises to the extracellular space. Its subcellular location is the apoplast. The enzyme catalyses breaks a beta-(1-&gt;4) bond in the backbone of a xyloglucan and transfers the xyloglucanyl segment on to O-4 of the non-reducing terminal glucose residue of an acceptor, which can be a xyloglucan or an oligosaccharide of xyloglucan.. Catalyzes xyloglucan endohydrolysis (XEH) and/or endotransglycosylation (XET). Cleaves and religates xyloglucan polymers, an essential constituent of the primary cell wall, and thereby participates in cell wall construction of growing tissues. The protein is Probable xyloglucan endotransglucosylase/hydrolase protein 29 (XTH29) of Arabidopsis thaliana (Mouse-ear cress).